Here is a 375-residue protein sequence, read N- to C-terminus: 23S rRNA (uracil(747)-C(5))-methyltransferase RlmC (375 aa).

4 residues coordinate [4Fe-4S] cluster: C3, C11, C14, and C87. Residues Q212, F241, E262, and N307 each contribute to the S-adenosyl-L-methionine site. The Nucleophile role is filled by C334.

The protein belongs to the class I-like SAM-binding methyltransferase superfamily. RNA M5U methyltransferase family. RlmC subfamily.

It catalyses the reaction uridine(747) in 23S rRNA + S-adenosyl-L-methionine = 5-methyluridine(747) in 23S rRNA + S-adenosyl-L-homocysteine + H(+). Catalyzes the formation of 5-methyl-uridine at position 747 (m5U747) in 23S rRNA. The chain is 23S rRNA (uracil(747)-C(5))-methyltransferase RlmC from Salmonella agona (strain SL483).